Here is a 425-residue protein sequence, read N- to C-terminus: MRNASGFLKTAGAPLVSATWLPPSPPPAMPTVAAGPQMERVDNGSQGAPQLFLTSALARGVSGVFVWTALLLTGHQIYSHLRSYTAPREQRFVIRLLFIVPIYAFDSWLSLLLLGGHPYYVYFDSVRDCYEAFVIYSFLTLCFQYLGGESAIMAEIRGKPIRSSCFYGTCCLRGMSYSITFLRFCKQATLQFCIVKPVMALITIILQAFDKYHDGDFNIHSGYLYVTLVYNASVSLALYALFLFYFATRDLLRPFEPVLKFLTIKAIIFLSFWQGMLLAILERCGVIPEVQAVDGTRVGAGTLAAGYQNFLICVEMLFASLALRYAFPSQVYSEKKNSPVPPAPMQSISSGLKETISPQDIVQDAIHNFSPAYQQYTQQSTHEAPGPGQGGHPAPSTHPGPASGSGGGKKSRNIEKRMLIPSEDL.

The next 7 membrane-spanning stretches (helical) occupy residues 51 to 71 (LFLT…TALL), 96 to 116 (LLFI…LLGG), 133 to 153 (FVIY…SAIM), 189 to 209 (TLQF…LQAF), 226 to 246 (VTLV…LFYF), 261 to 281 (FLTI…LAIL), and 303 to 323 (LAAG…SLAL). The tract at residues 375 to 425 (QYTQQSTHEAPGPGQGGHPAPSTHPGPASGSGGGKKSRNIEKRMLIPSEDL) is disordered. The span at 392 to 402 (HPAPSTHPGPA) shows a compositional bias: low complexity.

It belongs to the TMEM184 family. In terms of tissue distribution, expressed in testis, pancreas, parotid salivary gland and mammary gland (at protein level).

The protein localises to the cell membrane. It is found in the cytoplasm. Its subcellular location is the perinuclear region. The protein resides in the cytoplasmic vesicle membrane. It localises to the early endosome membrane. The protein localises to the endosome. It is found in the cytoplasmic vesicle. Its subcellular location is the secretory vesicle membrane. Functionally, acts as a heparin receptor in vascular cells. May be involved in vesicle transport in exocrine cells and Sertoli cells. In Mus musculus (Mouse), this protein is Transmembrane protein 184A (Tmem184a).